We begin with the raw amino-acid sequence, 418 residues long: Alpha-(1-&gt;3)-arabinofuranosyltransferase (418 aa).

The next 11 membrane-spanning stretches (helical) occupy residues 25-45 (NAVA…VLAI), 81-101 (YLYN…THFT), 102-122 (LARW…FGLL), 125-145 (LSGW…AMLT), 153-173 (IFSN…WCVV), 183-203 (VIGL…LPLV), 210-230 (LILG…LVPG), 266-286 (MEIT…LALL), 293-312 (PYFW…FFLS), 327-349 (IFTL…AYFF), and 372-392 (ATVG…IWFI).

Belongs to the glycosyltransferase 87 family.

Its subcellular location is the cell membrane. It carries out the reaction Adds an alpha-D-arabinofuranosyl group from trans,octacis-decaprenylphospho-beta-D-arabinofuranose at the 3-O-position of an alpha-(1-&gt;5)-arabinofuranan chain attached to a beta-(1-&gt;5)-galactofuranan chain.. It participates in cell wall biogenesis; cell wall polysaccharide biosynthesis. Functionally, involved in the biosynthesis of the arabinogalactan (AG) region of the mycolylarabinogalactan-peptidoglycan (mAGP) complex, an essential component of the corynebacterial cell wall. Catalyzes the addition of an arabinofuranosyl (Araf) residue from the sugar donor beta-D-arabinofuranosyl-1-monophosphoryldecaprenol (DPA) on the C-3 of an alpha-(1-&gt;5)-linked Araf from the arabinan backbone of AG. The chain is Alpha-(1-&gt;3)-arabinofuranosyltransferase from Corynebacterium glutamicum (strain ATCC 13032 / DSM 20300 / JCM 1318 / BCRC 11384 / CCUG 27702 / LMG 3730 / NBRC 12168 / NCIMB 10025 / NRRL B-2784 / 534).